Reading from the N-terminus, the 134-residue chain is NAD(P)H-quinone oxidoreductase subunit 3 (134 aa).

The next 3 helical transmembrane spans lie at 20–40 (GYDA…LALV), 78–98 (MFAL…PWAV), and 103–123 (LGLL…VALA).

This sequence belongs to the complex I subunit 3 family. In terms of assembly, NDH-1 can be composed of about 15 different subunits; different subcomplexes with different compositions have been identified which probably have different functions.

It is found in the cellular thylakoid membrane. It catalyses the reaction a plastoquinone + NADH + (n+1) H(+)(in) = a plastoquinol + NAD(+) + n H(+)(out). The enzyme catalyses a plastoquinone + NADPH + (n+1) H(+)(in) = a plastoquinol + NADP(+) + n H(+)(out). Its function is as follows. NDH-1 shuttles electrons from an unknown electron donor, via FMN and iron-sulfur (Fe-S) centers, to quinones in the respiratory and/or the photosynthetic chain. The immediate electron acceptor for the enzyme in this species is believed to be plastoquinone. Couples the redox reaction to proton translocation, and thus conserves the redox energy in a proton gradient. Cyanobacterial NDH-1 also plays a role in inorganic carbon-concentration. This chain is NAD(P)H-quinone oxidoreductase subunit 3, found in Prochlorococcus marinus (strain MIT 9303).